We begin with the raw amino-acid sequence, 301 residues long: UDP-N-acetylenolpyruvoylglucosamine reductase (301 aa).

The FAD-binding PCMH-type domain maps to 24–190 (RVGGLAQFYD…VSAQLQLQPG (167 aa)). The active site involves Arg-169. Ser-220 functions as the Proton donor in the catalytic mechanism. Glu-290 is a catalytic residue.

This sequence belongs to the MurB family. Requires FAD as cofactor.

It localises to the cytoplasm. It carries out the reaction UDP-N-acetyl-alpha-D-muramate + NADP(+) = UDP-N-acetyl-3-O-(1-carboxyvinyl)-alpha-D-glucosamine + NADPH + H(+). The protein operates within cell wall biogenesis; peptidoglycan biosynthesis. In terms of biological role, cell wall formation. The sequence is that of UDP-N-acetylenolpyruvoylglucosamine reductase from Synechococcus sp. (strain ATCC 27144 / PCC 6301 / SAUG 1402/1) (Anacystis nidulans).